Consider the following 266-residue polypeptide: Small ribosomal subunit protein eS1 (266 aa).

The tract at residues 234-266 (EGGTGTATKATGDDTGAKVERADGYEPPIQETV) is disordered. The span at 244 to 257 (TGDDTGAKVERADG) shows a compositional bias: basic and acidic residues.

The protein belongs to the eukaryotic ribosomal protein eS1 family. Component of the small ribosomal subunit. Mature ribosomes consist of a small (40S) and a large (60S) subunit. The 40S subunit contains about 33 different proteins and 1 molecule of RNA (18S). The 60S subunit contains about 49 different proteins and 3 molecules of RNA (28S, 5.8S and 5S). Part of the small subunit (SSU) processome, composed of more than 70 proteins and the RNA chaperone small nucleolar RNA (snoRNA) U3.

Its subcellular location is the cytoplasm. The protein localises to the nucleus. The protein resides in the nucleolus. Component of the small ribosomal subunit. The ribosome is a large ribonucleoprotein complex responsible for the synthesis of proteins in the cell. Part of the small subunit (SSU) processome, first precursor of the small eukaryotic ribosomal subunit. During the assembly of the SSU processome in the nucleolus, many ribosome biogenesis factors, an RNA chaperone and ribosomal proteins associate with the nascent pre-rRNA and work in concert to generate RNA folding, modifications, rearrangements and cleavage as well as targeted degradation of pre-ribosomal RNA by the RNA exosome. May play a role during erythropoiesis. The polypeptide is Small ribosomal subunit protein eS1 (rps3a) (Solea senegalensis (Senegalese sole)).